Reading from the N-terminus, the 754-residue chain is Elongation factor G-1, mitochondrial (754 aa).

The N-terminal 17 residues, 1-17 (MARFPTSPAPNRLLRLF), are a transit peptide targeting the mitochondrion. The tr-type G domain maps to 63 to 340 (DKLRNIGISA…GVVSFLPSPN (278 aa)). GTP is bound by residues 72–79 (AHIDSGKT), 139–143 (DTPGH), and 193–196 (NKLD).

It belongs to the TRAFAC class translation factor GTPase superfamily. Classic translation factor GTPase family. EF-G/EF-2 subfamily. Expressed in cotyledons and adult leaves at the same levels.

The protein localises to the mitochondrion. It participates in protein biosynthesis; polypeptide chain elongation. Its function is as follows. Mitochondrial GTPase that catalyzes the GTP-dependent ribosomal translocation step during translation elongation. During this step, the ribosome changes from the pre-translocational (PRE) to the post-translocational (POST) state as the newly formed A-site-bound peptidyl-tRNA and P-site-bound deacylated tRNA move to the P and E sites, respectively. Catalyzes the coordinated movement of the two tRNA molecules, the mRNA and conformational changes in the ribosome. The protein is Elongation factor G-1, mitochondrial (MEFG1) of Arabidopsis thaliana (Mouse-ear cress).